The following is a 105-amino-acid chain: Sec-independent protein translocase protein TatA (105 aa).

A helical transmembrane segment spans residues 1 to 21; sequence MSLGPWEIGIIVLLIIVLFGA. Over residues 41 to 50 the composition is skewed to basic and acidic residues; the sequence is EVKEMNKDGD. Residues 41-105 form a disordered region; the sequence is EVKEMNKDGD…QNYEDPNRTS (65 aa). A compositionally biased stretch (low complexity) spans 52–92; sequence PEQQQQPQQQIAPNQIEAPQPNFEQHYQGQQVQQPQNPQTP. The segment covering 96-105 has biased composition (basic and acidic residues); that stretch reads QNYEDPNRTS.

Belongs to the TatA/E family. In terms of assembly, the Tat system comprises two distinct complexes: a TatABC complex, containing multiple copies of TatA, TatB and TatC subunits, and a separate TatA complex, containing only TatA subunits. Substrates initially bind to the TatABC complex, which probably triggers association of the separate TatA complex to form the active translocon.

It is found in the cell membrane. In terms of biological role, part of the twin-arginine translocation (Tat) system that transports large folded proteins containing a characteristic twin-arginine motif in their signal peptide across membranes. TatA could form the protein-conducting channel of the Tat system. The chain is Sec-independent protein translocase protein TatA from Corynebacterium glutamicum (strain ATCC 13032 / DSM 20300 / JCM 1318 / BCRC 11384 / CCUG 27702 / LMG 3730 / NBRC 12168 / NCIMB 10025 / NRRL B-2784 / 534).